We begin with the raw amino-acid sequence, 200 residues long: Serine/arginine-rich splicing factor RSZ23 (200 aa).

In terms of domain architecture, RRM spans 2-71 (ARVYVGNLDP…NGWRVELSTK (70 aa)). The CCHC-type zinc-finger motif lies at 86 to 103 (MKCYECGEPGHFARECRL). Positions 105-200 (IGSGGLGSGR…REESPYANNA (96 aa)) are disordered. The segment covering 113–139 (GRRRSRSRSRSPRYRGRSRSRSPRYRR) has biased composition (basic residues).

It belongs to the splicing factor SR family. Extensively phosphorylated on serine residues in the RS domain. In terms of tissue distribution, expressed in roots, leaves and immature seeds.

Its subcellular location is the nucleus. In terms of biological role, involved in pre-mRNA splicing. In protoplast assay, enhances splicing efficiency of WAXY intron 1 and alters the selection of the 5'-splice sites by stimulating site 1 (proximal site). This is Serine/arginine-rich splicing factor RSZ23 (RSZ23) from Oryza sativa subsp. japonica (Rice).